The chain runs to 490 residues: Scarecrow-like transcription factor PAT1 (490 aa).

Positions Thr-110–Lys-490 constitute a GRAS domain. The interval Arg-117–Ile-178 is leucine repeat I (LRI). Positions Met-197 to Gly-262 are VHIID. Residues Val-228–Asp-232 carry the VHIID motif. Positions Ile-278–Asn-310 are leucine repeat II (LRII). Residues Leu-319–Asn-413 form a PFYRE region. The SAW stretch occupies residues Ala-416 to Lys-490.

It belongs to the GRAS family.

The protein localises to the cytoplasm. In terms of biological role, probable transcription factor involved in phytochrome A (phyA) signal transduction. This chain is Scarecrow-like transcription factor PAT1 (PAT1), found in Arabidopsis thaliana (Mouse-ear cress).